Here is a 942-residue protein sequence, read N- to C-terminus: Alanine--tRNA ligase (942 aa).

Residues histidine 586, histidine 590, cysteine 695, and histidine 699 each coordinate Zn(2+).

The protein belongs to the class-II aminoacyl-tRNA synthetase family. Zn(2+) serves as cofactor.

It is found in the cytoplasm. It carries out the reaction tRNA(Ala) + L-alanine + ATP = L-alanyl-tRNA(Ala) + AMP + diphosphate. Functionally, catalyzes the attachment of alanine to tRNA(Ala) in a two-step reaction: alanine is first activated by ATP to form Ala-AMP and then transferred to the acceptor end of tRNA(Ala). Also edits incorrectly charged Ser-tRNA(Ala) and Gly-tRNA(Ala) via its editing domain. This chain is Alanine--tRNA ligase, found in Akkermansia muciniphila (strain ATCC BAA-835 / DSM 22959 / JCM 33894 / BCRC 81048 / CCUG 64013 / CIP 107961 / Muc).